Consider the following 261-residue polypeptide: MWLLILFLILSLGWNDAAPPGQSRIIGGFNCEKNSQPWQVAVYHFNEPQCGGVLIHPSWVITAAHCYSVNYQVWLGRNNLLEDEPFAQHRLVSQSFPHPGFNLDIIKNHTRKPGNDYSNDLMLLHLKTPADITDGVKVIDLPTEEPKVGSTCLTSGWGSITPLKWEFPDDLQCVNIHLLSNEKCIKAYNDEVTDVMLCAGEMDGGKDICKGDSGGPLICDGVLQGITSWGSMPCGEPNKPSVYTKLIKFTSWMKKVMKENP.

The signal sequence occupies residues 1-18 (MWLLILFLILSLGWNDAA). Positions 19–24 (PPGQSR) are cleaved as a propeptide — activation peptide. The Peptidase S1 domain occupies 25–258 (IIGGFNCEKN…FTSWMKKVMK (234 aa)). 5 cysteine pairs are disulfide-bonded: Cys-31–Cys-173, Cys-50–Cys-66, Cys-152–Cys-219, Cys-184–Cys-198, and Cys-209–Cys-234. Catalysis depends on His-65, which acts as the Charge relay system. The N-linked (GlcNAc...) asparagine glycan is linked to Asn-108. Asp-120 acts as the Charge relay system in catalysis. The Charge relay system role is filled by Ser-213.

Belongs to the peptidase S1 family. Kallikrein subfamily.

It carries out the reaction Preferential cleavage of Arg-|-Xaa bonds in small molecule substrates. Highly selective action to release kallidin (lysyl-bradykinin) from kininogen involves hydrolysis of Met-|-Xaa or Leu-|-Xaa.. Functionally, glandular kallikreins cleave Met-Lys and Arg-Ser bonds in kininogen to release Lys-bradykinin. The sequence is that of Prostatic glandular kallikrein-6 (Klk6) from Rattus norvegicus (Rat).